Here is a 697-residue protein sequence, read N- to C-terminus: Phenoloxidase 1 (697 aa).

The propeptide at 1-101 is removed by PPAE1; sequence MSDMSGDVVE…PKHQEMATEV (101 aa). Positions 217, 221, and 247 each coordinate Cu cation. N-linked (GlcNAc...) asparagine glycans are attached at residues Asn-260 and Asn-313. Glu-355 (proton acceptor) is an active-site residue. Residues His-370, His-374, and His-410 each contribute to the Cu cation site. N-linked (GlcNAc...) asparagine glycosylation is found at Asn-498 and Asn-552. 2 cysteine pairs are disulfide-bonded: Cys-587–Cys-631 and Cys-589–Cys-638.

This sequence belongs to the tyrosinase family. In terms of assembly, heterodimer. Cu(2+) is required as a cofactor. In terms of processing, activated by the cleavage of the N-terminal propeptide by PPAE1. In terms of tissue distribution, expressed in hemocytes.

It localises to the secreted. It carries out the reaction L-tyrosine + O2 = L-dopaquinone + H2O. It catalyses the reaction 2 L-dopa + O2 = 2 L-dopaquinone + 2 H2O. Activated by a cationic detergent cetyl pyridinium chloride (CPC). Inhibited by phenyl thio-urea (PTU). Functionally, this is a copper-containing oxidase that functions in the formation of pigments such as melanins and other polyphenolic compounds. Catalyzes the rate-limiting conversions of tyrosine to DOPA, DOPA to DOPA-quinone and possibly 5,6 dihydroxyindole to indole-5'6 quinone. Catalyzes the oxidation of 4-methylcatechol. Binds to the surface of hemocytes and is involved in hemocyte melanization. This Spodoptera litura (Asian cotton leafworm) protein is Phenoloxidase 1.